We begin with the raw amino-acid sequence, 577 residues long: Arginine--tRNA ligase (577 aa).

The 'HIGH' region signature appears at 122 to 132 (PNVAKEMHVGH).

The protein belongs to the class-I aminoacyl-tRNA synthetase family. As to quaternary structure, monomer.

The protein resides in the cytoplasm. The enzyme catalyses tRNA(Arg) + L-arginine + ATP = L-arginyl-tRNA(Arg) + AMP + diphosphate. The polypeptide is Arginine--tRNA ligase (Shigella flexneri).